Reading from the N-terminus, the 385-residue chain is Probable protein phosphatase 2C 79 (385 aa).

An N-terminal signal peptide occupies residues 1 to 18; sequence MLSLFFNFLTSCLWPSSS. One can recognise a PPM-type phosphatase domain in the interval 47–356; sequence DFSMAVVQAN…DDITVVVLFL (310 aa). Ser76 carries the phosphoserine modification. Residues Asp87, Gly88, Asp288, and Asp347 each contribute to the Mn(2+) site.

The protein belongs to the PP2C family. It depends on Mg(2+) as a cofactor. Mn(2+) serves as cofactor.

It carries out the reaction O-phospho-L-seryl-[protein] + H2O = L-seryl-[protein] + phosphate. The enzyme catalyses O-phospho-L-threonyl-[protein] + H2O = L-threonyl-[protein] + phosphate. Functionally, may dephosphorylate and repress plasma membrane H(+)-ATPases (PM H(+)-ATPases, e.g. AHA1 and AHA2), thus influencing negatively plant growth and fitness. The chain is Probable protein phosphatase 2C 79 from Arabidopsis thaliana (Mouse-ear cress).